The primary structure comprises 304 residues: Non-structural maintenance of chromosomes element 3 homolog (304 aa).

Disordered stretches follow at residues M1–Q82 and A285–S304. Positions A32 to F43 are enriched in basic and acidic residues. 3 positions are modified to phosphoserine: S57, S60, and S64. Positions S60–R80 are enriched in low complexity. The segment at G78–S304 is interaction with NSMCE1. The region spanning L85–A285 is the MAGE domain.

As to quaternary structure, component of the SMC5-SMC6 complex which consists at least of SMC5, SMC6, NSMCE2, NSMCE1, NSMCE4A or EID3 and NSMCE3. NSMCE1, NSMCE4A or EID3 and NSMCE3 probably form a subcomplex that bridges the head domains of the SMC5:SMC6 heterodimer. Interacts with PJA1. Interacts with E2F1 (via C-terminus). Interacts with NGFR (via C-terminus). Interacts with NSMCE1. Interacts with NSMCE4. Interacts with SMC6. Interacts with EID3. As to expression, ubiquitous.

The protein localises to the cytoplasm. It is found in the nucleus. Its subcellular location is the chromosome. The protein resides in the telomere. Functionally, component of the SMC5-SMC6 complex, a complex involved in repair of DNA double-strand breaks by homologous recombination. The complex may promote sister chromatid homologous recombination by recruiting the SMC1-SMC3 cohesin complex to double-strand breaks. The complex is required for telomere maintenance via recombination in ALT (alternative lengthening of telomeres) cell lines and mediates sumoylation of shelterin complex (telosome) components which is proposed to lead to shelterin complex disassembly in ALT-associated PML bodies (APBs). In vitro enhances ubiquitin ligase activity of NSMCE1. Proposed to act through recruitment and/or stabilization of the Ubl-conjugating enzyme (E2) at the E3:substrate complex. May be a growth suppressor that facilitates the entry of the cell into cell cycle arrest. This is Non-structural maintenance of chromosomes element 3 homolog from Homo sapiens (Human).